A 473-amino-acid polypeptide reads, in one-letter code: Ral-GDS-related protein (473 aa).

The tract at residues 117 to 215 (EPNEAKPDDP…NQPSEELPDM (99 aa)) is disordered. Positions 134-157 (ALTMPALEPAPPLLADLGPALEPE) are enriched in low complexity. Over residues 173-185 (GPAPAPGEGPPPG) the composition is skewed to pro residues. In terms of domain architecture, Ras-GEF spans 219-471 (PPRLLAEQLT…YKLSCQLEPE (253 aa)).

The protein resides in the cytoplasmic vesicle. The protein is Ral-GDS-related protein (RGL4) of Homo sapiens (Human).